The sequence spans 62 residues: UPF0291 protein CLD_1956 (62 aa).

It belongs to the UPF0291 family.

It is found in the cytoplasm. The sequence is that of UPF0291 protein CLD_1956 from Clostridium botulinum (strain Okra / Type B1).